A 475-amino-acid polypeptide reads, in one-letter code: UDP-glycosyltransferase 84A4 (475 aa).

The active-site Proton acceptor is the His20. His20 serves as a coordination point for an anthocyanidin. Positions 342, 357, 360, 361, 362, and 365 each coordinate UDP-alpha-D-glucose. Gly380 contacts an anthocyanidin. Residues Asp381 and Gln382 each coordinate UDP-alpha-D-glucose.

Belongs to the UDP-glycosyltransferase family.

It catalyses the reaction (E)-4-coumarate + UDP-alpha-D-glucose = 4-O-(beta-D-glucosyl)-trans-4-coumarate + UDP + H(+). The catalysed reaction is (E)-ferulate + UDP-alpha-D-glucose = 1-O-[(E)-feruloyl]-beta-D-glucose + UDP. The enzyme catalyses (E)-caffeate + UDP-alpha-D-glucose = 1-O-[(E)-caffeoyl]-beta-D-glucose + UDP. It carries out the reaction (E)-sinapate + UDP-alpha-D-glucose = 1-O-(trans-sinapoyl)-beta-D-glucose + UDP. It catalyses the reaction (E)-cinnamate + UDP-alpha-D-glucose = 1-O-(trans-cinnamoyl)-beta-D-glucose + UDP. Functionally, UDP-glucosyltransferase that forms glucose esters with phenylpropanoids. Glucosylates 4-coumarate, ferulate, caffeate, sinapate and cinnamate. The polypeptide is UDP-glycosyltransferase 84A4 (Arabidopsis thaliana (Mouse-ear cress)).